Here is a 294-residue protein sequence, read N- to C-terminus: Putative isocitrate dehydrogenase [NAD] subunit-like 4 (294 aa).

Belongs to the isocitrate and isopropylmalate dehydrogenases family.

Its function is as follows. Performs an essential role in the oxidative function of the citric acid cycle. The chain is Putative isocitrate dehydrogenase [NAD] subunit-like 4 (IDH4) from Arabidopsis thaliana (Mouse-ear cress).